The sequence spans 444 residues: Trigger factor (444 aa).

Positions 160–245 (DMQVTFDFEG…VKQVEKPKLP (86 aa)) constitute a PPIase FKBP-type domain.

Belongs to the FKBP-type PPIase family. Tig subfamily.

The protein localises to the cytoplasm. The catalysed reaction is [protein]-peptidylproline (omega=180) = [protein]-peptidylproline (omega=0). Functionally, involved in protein export. Acts as a chaperone by maintaining the newly synthesized protein in an open conformation. Functions as a peptidyl-prolyl cis-trans isomerase. In Acinetobacter baylyi (strain ATCC 33305 / BD413 / ADP1), this protein is Trigger factor.